We begin with the raw amino-acid sequence, 166 residues long: HTH-type transcriptional regulator PecS (166 aa).

Residues 25-160 (PMLVIGTLSR…LRALLGRVEK (136 aa)) enclose the HTH marR-type domain.

Its subcellular location is the cytoplasm. Its activity is regulated as follows. The presence of PecM is required to ensure the full regulation of the pecS-pecM intergenic region by PecS. Negatively regulates the expression of genes encoding pectinase and cellulase, which play a major role in virulence, and the expression of the blue pigment indigoidine, which is implicated in pathogenicity and protection from oxidative stress. Represses the expression of genes involved in indigoidine biosynthesis by binding to indA and indC promoter regions. Also binds to promoter sites in the pecS-pecM intergenic region and negatively autoregulates its expression as well as that of pecM. The polypeptide is HTH-type transcriptional regulator PecS (Dickeya dadantii (strain 3937) (Erwinia chrysanthemi (strain 3937))).